The primary structure comprises 159 residues: Small ribosomal subunit protein uS15 (159 aa).

Positions methionine 1–valine 16 are enriched in basic residues. Residues methionine 1–arginine 22 are disordered.

The protein belongs to the universal ribosomal protein uS15 family. As to quaternary structure, part of the 30S ribosomal subunit.

The sequence is that of Small ribosomal subunit protein uS15 from Ignicoccus hospitalis (strain KIN4/I / DSM 18386 / JCM 14125).